The following is a 677-amino-acid chain: Potassium channel KAT1 (677 aa).

Topologically, residues 1-63 (MSISWTRNFF…PFNPRYRAWE (63 aa)) are cytoplasmic. The chain crosses the membrane as a helical span at residues 64–84 (MWLVLLVIYSAWICPFQFAFI). Residues 85 to 90 (TYKKDA) lie on the Extracellular side of the membrane. A helical transmembrane segment spans residues 91–111 (IFIIDNIVNGFFAIDIILTFF). Topologically, residues 112–134 (VAYLDSHSYLLVDSPKKIAIRYL) are cytoplasmic. The helical transmembrane segment at 135–155 (STWFAFDVCSTAPFQPLSLLF) threads the bilayer. Topologically, residues 156–165 (NYNGSELGFR) are extracellular. A helical; Voltage-sensor membrane pass occupies residues 166–186 (ILSMLRLWRLRRVSSLFARLE). The Cytoplasmic portion of the chain corresponds to 187–200 (KDIRFNYFWIRCTK). A helical membrane pass occupies residues 201–221 (LISVTLFAIHCAGCFNYLIAD). Topologically, residues 222–248 (RYPNPRKTWIGAVYPNFKEASLWNRYV) are extracellular. The segment at residues 249-268 (TALYWSITTLTTTGYGDFHA) is an intramembrane region (pore-forming). The Extracellular portion of the chain corresponds to 269 to 272 (ENPR). The chain crosses the membrane as a helical span at residues 273–293 (EMLFDIFFMMFNLGLTAYLIG). At 294–677 (NMTNLVVHWT…DGDHLYFSSN (384 aa)) the chain is on the cytoplasmic side. 377-496 (LFQGVSRNFL…RVIMNNLFMK (120 aa)) contacts a nucleoside 3',5'-cyclic phosphate. A compositionally biased stretch (basic and acidic residues) spans 568-577 (IERAKVERSS). A disordered region spans residues 568-601 (IERAKVERSSSETAGRSYANDSSKKDPYCSSSNQ). The KHA domain occupies 612 to 677 (RVTIHMMSES…DGDHLYFSSN (66 aa)).

This sequence belongs to the potassium channel family. Plant (TC 1.A.1.4) subfamily. As to quaternary structure, the potassium channel is probably composed of a homo- or heterotetrameric complex of pore-forming subunits. May interact with AKT2 and KAT2. Interacts with SLAC1 and SLAH3. Expressed in guard cells, and in roots.

The protein resides in the membrane. Highly selective inward-rectifying potassium channel. This voltage-gated channel could mediate long-term potassium influx into guard cells leading to stomatal opening. Assuming opened or closed conformations in response to the voltage difference across the membrane, the channel is activated by hyperpolarization. The channel activity is enhanced upon external acidification. Also permeable to ammonium ions. Blocked by tetraethylammonium and barium ions. This Arabidopsis thaliana (Mouse-ear cress) protein is Potassium channel KAT1 (KAT1).